A 318-amino-acid polypeptide reads, in one-letter code: MAPESLVEVPGCNCFWYLGVLAAAWWGLRAACCLLNGARAWVLGSGAQVGPRIGKWAVVTGATDGIGKAYAEELARRGMSIVLISRSPEKLDEAAKHIKETFKVETKIIAADFGKPTEIYERIEAGLRDLEIGVLVNNVGVSYEYPEYFLEIPDLENTLDKMININIMSVCQMTRLVLPGMLGRGKGVILNISSASGMYPVPLLTVYSATKAFVDFFSRGLHAEYRNKGINVQSVLPFYVATKLAKIRKPTWDKPSPETYVRSAVNTVGLQTQTNGYLPHAIMGWISTSLVPVSVAISMGMKMNKGLRSRFLKRKKQK.

Residues 15 to 35 (FWYLGVLAAAWWGLRAACCLL) form a helical membrane-spanning segment. Position 54–83 (54–83 (GKWAVVTGATDGIGKAYAEELARRGMSIVL)) interacts with NADP(+). 2 consecutive transmembrane segments (helical) span residues 187–207 (GVIL…LTVY) and 281–301 (AIMG…SMGM). Serine 194 contributes to the substrate binding site. The active-site Proton acceptor is tyrosine 207.

This sequence belongs to the short-chain dehydrogenases/reductases (SDR) family. 17-beta-HSD 3 subfamily.

The protein resides in the endoplasmic reticulum membrane. The catalysed reaction is a very-long-chain (3R)-3-hydroxyacyl-CoA + NADP(+) = a very-long-chain 3-oxoacyl-CoA + NADPH + H(+). It catalyses the reaction 17beta-estradiol + NAD(+) = estrone + NADH + H(+). It carries out the reaction 17beta-estradiol + NADP(+) = estrone + NADPH + H(+). It participates in lipid metabolism; fatty acid biosynthesis. The protein operates within steroid biosynthesis; estrogen biosynthesis. Functionally, catalyzes the second of the four reactions of the long-chain fatty acids elongation cycle. This endoplasmic reticulum-bound enzymatic process, allows the addition of two carbons to the chain of long- and very long-chain fatty acids/VLCFAs per cycle. This enzyme has a 3-ketoacyl-CoA reductase activity, reducing 3-ketoacyl-CoA to 3-hydroxyacyl-CoA, within each cycle of fatty acid elongation. Thereby, it may participate in the production of VLCFAs of different chain lengths that are involved in multiple biological processes as precursors of membrane lipids and lipid mediators. May also catalyze the transformation of estrone (E1) into estradiol (E2) and play a role in estrogen formation. The chain is Very-long-chain 3-oxoacyl-CoA reductase-A (hsd17b12-a) from Xenopus laevis (African clawed frog).